Here is a 152-residue protein sequence, read N- to C-terminus: Transcriptional regulator MraZ (152 aa).

SpoVT-AbrB domains lie at Ala-5–Glu-52 and Ala-81–Thr-124.

This sequence belongs to the MraZ family. In terms of assembly, forms oligomers.

The protein resides in the cytoplasm. It is found in the nucleoid. Functionally, negatively regulates its own expression and that of the subsequent genes in the proximal part of the division and cell wall (dcw) gene cluster. Acts by binding directly to DNA. May also regulate the expression of genes outside the dcw cluster. This Salmonella typhi protein is Transcriptional regulator MraZ.